A 131-amino-acid chain; its full sequence is Small ribosomal subunit protein uS8 (131 aa).

It belongs to the universal ribosomal protein uS8 family. As to quaternary structure, part of the 30S ribosomal subunit. Contacts proteins S5 and S12.

One of the primary rRNA binding proteins, it binds directly to 16S rRNA central domain where it helps coordinate assembly of the platform of the 30S subunit. This is Small ribosomal subunit protein uS8 from Ruthia magnifica subsp. Calyptogena magnifica.